The primary structure comprises 338 residues: Mugineic-acid 3-dioxygenase (338 aa).

One can recognise a Fe2OG dioxygenase domain in the interval 180 to 283; sequence DISGGRVVVD…RLSVASFIVP (104 aa). Fe cation is bound by residues His208, Asp210, and His264. Residue Arg274 coordinates 2-oxoglutarate.

The protein belongs to the iron/ascorbate-dependent oxidoreductase family. Requires Fe(2+) as cofactor. L-ascorbate is required as a cofactor. In terms of tissue distribution, expressed in roots, but not in leaves.

The enzyme catalyses mugineate + 2-oxoglutarate + O2 = 3-epihydroxymugineate + succinate + CO2 + H(+). It catalyses the reaction 2'-deoxymugineate + 2-oxoglutarate + O2 = 3-epihydroxy-2'-deoxymugineate + succinate + CO2 + H(+). Involved in the biosynthesis of mugineic acid family of phytosiderophores. Hydroxylates the C-3 positions of mugineic acid (MA) and 2'-deoxymugineic acid (DMA). May be involved in boron tolerance. The protein is Mugineic-acid 3-dioxygenase (IDS2) of Hordeum vulgare (Barley).